Here is a 402-residue protein sequence, read N- to C-terminus: Probable tRNA sulfurtransferase (402 aa).

Residues 61–166 enclose the THUMP domain; sequence EEIMKRISKV…SDAAYLYSRV (106 aa). ATP contacts are provided by residues 184-185, 209-210, Arg-266, Gly-288, and Gln-297; these read ML and HF.

Belongs to the ThiI family.

The protein resides in the cytoplasm. The catalysed reaction is [ThiI sulfur-carrier protein]-S-sulfanyl-L-cysteine + a uridine in tRNA + 2 reduced [2Fe-2S]-[ferredoxin] + ATP + H(+) = [ThiI sulfur-carrier protein]-L-cysteine + a 4-thiouridine in tRNA + 2 oxidized [2Fe-2S]-[ferredoxin] + AMP + diphosphate. The enzyme catalyses [ThiS sulfur-carrier protein]-C-terminal Gly-Gly-AMP + S-sulfanyl-L-cysteinyl-[cysteine desulfurase] + AH2 = [ThiS sulfur-carrier protein]-C-terminal-Gly-aminoethanethioate + L-cysteinyl-[cysteine desulfurase] + A + AMP + 2 H(+). The protein operates within cofactor biosynthesis; thiamine diphosphate biosynthesis. Its function is as follows. Catalyzes the ATP-dependent transfer of a sulfur to tRNA to produce 4-thiouridine in position 8 of tRNAs, which functions as a near-UV photosensor. Also catalyzes the transfer of sulfur to the sulfur carrier protein ThiS, forming ThiS-thiocarboxylate. This is a step in the synthesis of thiazole, in the thiamine biosynthesis pathway. The sulfur is donated as persulfide by IscS. In Macrococcus caseolyticus (strain JCSC5402) (Macrococcoides caseolyticum), this protein is Probable tRNA sulfurtransferase.